The chain runs to 829 residues: Leucine--tRNA ligase (829 aa).

The 'HIGH' region signature appears at 40–50; that stretch reads PYPSGNIHMGH. A 'KMSKS' region motif is present at residues 581 to 585; that stretch reads KMSKS. An ATP-binding site is contributed by K584.

It belongs to the class-I aminoacyl-tRNA synthetase family.

Its subcellular location is the cytoplasm. It carries out the reaction tRNA(Leu) + L-leucine + ATP = L-leucyl-tRNA(Leu) + AMP + diphosphate. This Oleidesulfovibrio alaskensis (strain ATCC BAA-1058 / DSM 17464 / G20) (Desulfovibrio alaskensis) protein is Leucine--tRNA ligase.